Reading from the N-terminus, the 148-residue chain is Puroindoline-B (148 aa).

The signal sequence occupies residues 1-19 (MKTLFLLALLALVASTTFA). Residues 20 to 29 (QYSEVGGWYN) constitute a propeptide that is removed on maturation.

In terms of processing, five disulfide bonds are present. As to expression, endosperm and aleurone layer of developing kernels. In the aleurone layer, mainly localized to starch granules and the surface of the plasma membrane, forming a uniform layer, also abundant in the intercellular space. In the endosperm, mainly localized to starch granules and the plasma membrane, but less abundant in the intercellular space. Not found in roots or coleoptiles.

Its subcellular location is the membrane. The protein resides in the secreted. It localises to the extracellular space. Functionally, acts as a membranotoxin, probably through its antibacterial and antifungal activities, contributing to the defense mechanism of the plant against predators. Forms monovalent cation-selective ion channels in membranes. Has antibacterial activity against the Gram-positive bacteria S.aureus and C.michiganensis, and the Gram-negative bacteria E.coli, P.syringae pv phaseoli, A.tumefaciens and E.carotovora subsp carotovora. Acts synergistically with PINA against bacteria. Contributes to grain texture and hardness. This is Puroindoline-B (PINB) from Triticum aestivum (Wheat).